A 211-amino-acid polypeptide reads, in one-letter code: uncharacterized protein (211 aa).

The first 20 residues, 1–20 (MSRVQISTVLAIDTATPAVT), serve as a signal peptide directing secretion.

This sequence to M.leprae ML0378.

This is an uncharacterized protein from Mycobacterium tuberculosis (strain CDC 1551 / Oshkosh).